The following is a 205-amino-acid chain: Large ribosomal subunit protein uL3 (205 aa).

The protein belongs to the universal ribosomal protein uL3 family. In terms of assembly, part of the 50S ribosomal subunit. Forms a cluster with proteins L14 and L19.

One of the primary rRNA binding proteins, it binds directly near the 3'-end of the 23S rRNA, where it nucleates assembly of the 50S subunit. The sequence is that of Large ribosomal subunit protein uL3 from Flavobacterium johnsoniae (strain ATCC 17061 / DSM 2064 / JCM 8514 / BCRC 14874 / CCUG 350202 / NBRC 14942 / NCIMB 11054 / UW101) (Cytophaga johnsonae).